Reading from the N-terminus, the 128-residue chain is D-ribose pyranase (128 aa).

The active-site Proton donor is the H20. Residues D28, H95, and 117–119 (YSN) each bind substrate.

It belongs to the RbsD / FucU family. RbsD subfamily. As to quaternary structure, homodecamer.

The protein localises to the cytoplasm. The catalysed reaction is beta-D-ribopyranose = beta-D-ribofuranose. Its pathway is carbohydrate metabolism; D-ribose degradation; D-ribose 5-phosphate from beta-D-ribopyranose: step 1/2. Catalyzes the interconversion of beta-pyran and beta-furan forms of D-ribose. The protein is D-ribose pyranase of Thermosipho africanus (strain TCF52B).